The following is a 533-amino-acid chain: Retinoid isomerohydrolase (533 aa).

S2 is subject to N-acetylserine. Residues T101 and T105 each carry the phosphothreonine modification. C112 is lipidated: S-palmitoyl cysteine; in membrane form. N6-acetyllysine is present on K113. The residue at position 117 (S117) is a Phosphoserine. Fe cation is bound at residue H180. C231 carries the S-palmitoyl cysteine; in membrane form lipid modification. The Fe cation site is built by H241 and H313. Residues C329 and C330 are each lipidated (S-palmitoyl cysteine; in membrane form). Position 527 (H527) interacts with Fe cation.

It belongs to the carotenoid oxygenase family. As to quaternary structure, interacts with MYO7A; this mediates light-dependent intracellular transport of RPE65. Requires Fe(2+) as cofactor. Post-translationally, palmitoylation by LRAT regulates ligand binding specificity; the palmitoylated form (membrane form) specifically binds all-trans-retinyl-palmitate, while the soluble unpalmitoylated form binds all-trans-retinol (vitamin A). As to expression, retinal pigment epithelium specific.

Its subcellular location is the cytoplasm. The protein resides in the cell membrane. It is found in the microsome membrane. It catalyses the reaction an all-trans-retinyl ester + H2O = 11-cis-retinol + a fatty acid + H(+). The enzyme catalyses lutein = (3R,3'S)-zeaxanthin. It carries out the reaction all-trans-retinyl hexadecanoate + H2O = 11-cis-retinol + hexadecanoate + H(+). Functionally, critical isomerohydrolase in the retinoid cycle involved in regeneration of 11-cis-retinal, the chromophore of rod and cone opsins. Catalyzes the cleavage and isomerization of all-trans-retinyl fatty acid esters to 11-cis-retinol which is further oxidized by 11-cis retinol dehydrogenase to 11-cis-retinal for use as visual chromophore. Essential for the production of 11-cis retinal for both rod and cone photoreceptors. Also capable of catalyzing the isomerization of lutein to meso-zeaxanthin an eye-specific carotenoid. The soluble form binds vitamin A (all-trans-retinol), making it available for LRAT processing to all-trans-retinyl ester. The membrane form, palmitoylated by LRAT, binds all-trans-retinyl esters, making them available for IMH (isomerohydrolase) processing to all-cis-retinol. The soluble form is regenerated by transferring its palmitoyl groups onto 11-cis-retinol, a reaction catalyzed by LRAT. This is Retinoid isomerohydrolase (RPE65) from Chlorocebus aethiops (Green monkey).